A 409-amino-acid chain; its full sequence is ATPase ASNA1 homolog (409 aa).

21–28 (KGGVGKTT) serves as a coordination point for ATP. The active site involves D62. 2 residues coordinate ATP: E303 and N330. Zn(2+) is bound by residues C342 and C345.

The protein belongs to the arsA ATPase family. In terms of assembly, homodimer.

The protein localises to the cytoplasm. Its subcellular location is the endoplasmic reticulum. Functionally, ATPase required for the post-translational delivery of tail-anchored (TA) proteins to the endoplasmic reticulum. Recognizes and selectively binds the transmembrane domain of TA proteins in the cytosol. This complex then targets to the endoplasmic reticulum by membrane-bound receptors, where the tail-anchored protein is released for insertion. This process is regulated by ATP binding and hydrolysis. ATP binding drives the homodimer towards the closed dimer state, facilitating recognition of newly synthesized TA membrane proteins. ATP hydrolysis is required for insertion. Subsequently, the homodimer reverts towards the open dimer state, lowering its affinity for the membrane-bound receptor, and returning it to the cytosol to initiate a new round of targeting. This Leishmania major protein is ATPase ASNA1 homolog.